Reading from the N-terminus, the 283-residue chain is Pantothenate synthetase (283 aa).

31–38 (MGALHDGH) lines the ATP pocket. The active-site Proton donor is the histidine 38. Residue glutamine 62 coordinates (R)-pantoate. Residue glutamine 62 coordinates beta-alanine. 148–151 (GKKD) is a binding site for ATP. Glutamine 154 provides a ligand contact to (R)-pantoate. ATP contacts are provided by residues valine 177 and 185-188 (KSSR).

Belongs to the pantothenate synthetase family. Homodimer.

Its subcellular location is the cytoplasm. The catalysed reaction is (R)-pantoate + beta-alanine + ATP = (R)-pantothenate + AMP + diphosphate + H(+). It participates in cofactor biosynthesis; (R)-pantothenate biosynthesis; (R)-pantothenate from (R)-pantoate and beta-alanine: step 1/1. In terms of biological role, catalyzes the condensation of pantoate with beta-alanine in an ATP-dependent reaction via a pantoyl-adenylate intermediate. The polypeptide is Pantothenate synthetase (Staphylococcus aureus (strain MSSA476)).